The primary structure comprises 145 residues: Protein SprT-like (145 aa).

The SprT-like domain maps to 5–141 (NYVKQVSVED…CGRCMGKLRL (137 aa)). Residue His64 coordinates Zn(2+). Glu65 is a catalytic residue. His68 contributes to the Zn(2+) binding site.

It belongs to the SprT family. Zn(2+) serves as cofactor.

It is found in the cytoplasm. In Streptococcus sanguinis (strain SK36), this protein is Protein SprT-like.